A 251-amino-acid polypeptide reads, in one-letter code: Hydroxyacylglutathione hydrolase (251 aa).

Residues histidine 53, histidine 55, aspartate 57, histidine 58, histidine 110, aspartate 127, and histidine 165 each contribute to the Zn(2+) site.

The protein belongs to the metallo-beta-lactamase superfamily. Glyoxalase II family. Monomer. The cofactor is Zn(2+).

The catalysed reaction is an S-(2-hydroxyacyl)glutathione + H2O = a 2-hydroxy carboxylate + glutathione + H(+). It functions in the pathway secondary metabolite metabolism; methylglyoxal degradation; (R)-lactate from methylglyoxal: step 2/2. Functionally, thiolesterase that catalyzes the hydrolysis of S-D-lactoyl-glutathione to form glutathione and D-lactic acid. The polypeptide is Hydroxyacylglutathione hydrolase (Salmonella dublin (strain CT_02021853)).